A 325-amino-acid polypeptide reads, in one-letter code: Protein UL76 (325 aa).

The segment at 222–286 is disordered; it reads ARASAVAGGR…VRGGGAVEPA (65 aa). The span at 247-258 shows a compositional bias: low complexity; sequence GPGAQTVSASGA.

This sequence belongs to the herpesviridae UL24 family.

The protein localises to the virion. It localises to the host cytoplasm. It is found in the host nucleus. Its subcellular location is the host nucleolus. The protein resides in the host Golgi apparatus. In terms of biological role, may participate in nuclear egress of viral particles. Plays a role in the dispersal of several host nucleolar proteins including NCL/nucleolin and NPM1. Since deletion of host NCL/nucleolin negatively impact on nuclear egress, UL76 supposedly acts on this process through its effect on host nucleoli. Induces cell cycle arrest in host cells at the G2/M phase following by apoptosis. The mechanism involves the inhibition of host mitotic complex cyclinB/CDK1. The sequence is that of Protein UL76 (UL76) from Human cytomegalovirus (strain Merlin) (HHV-5).